The chain runs to 161 residues: DNA-binding protein inhibitor ID-4 (161 aa).

Residues 52-104 enclose the bHLH domain; sequence AAEAAADEPALCLQCDMNDCYSRLRRLVPTIPPNKKVSKVEILPHVIDYILDL. A disordered region spans residues 116 to 161; the sequence is RQPPPPAPPHHPAGTCPAAPPRTPLTALNTDPAGAVNKQGDSILCR. Residues 117–126 are compositionally biased toward pro residues; it reads QPPPPAPPHH.

In terms of assembly, heterodimer with other HLH proteins.

The protein resides in the nucleus. In terms of biological role, transcriptional regulator (lacking a basic DNA binding domain) which negatively regulates the basic helix-loop-helix (bHLH) transcription factors by forming heterodimers and inhibiting their DNA binding and transcriptional activity. Implicated in regulating a variety of cellular processes, including cellular growth, senescence, differentiation, apoptosis, angiogenesis, and neoplastic transformation. This chain is DNA-binding protein inhibitor ID-4 (ID4), found in Sus scrofa (Pig).